Consider the following 148-residue polypeptide: Cysteine-rich venom protein VAR6 (148 aa).

Residues 1 to 22 (MILLKLYLTLAAILCQSRGTTS) form the signal peptide. Residues 41 to 140 (NKHNDLRRTV…AGVMVGHYTQ (100 aa)) form the SCP domain.

This sequence belongs to the CRISP family. Post-translationally, contains 8 disulfide bonds. As to expression, expressed by the venom gland.

The protein resides in the secreted. Its function is as follows. Blocks ryanodine receptors, and potassium channels. The sequence is that of Cysteine-rich venom protein VAR6 from Varanus acanthurus (Ridge-tailed monitor).